Here is a 221-residue protein sequence, read N- to C-terminus: Probable transaldolase (221 aa).

The active-site Schiff-base intermediate with substrate is lysine 87.

This sequence belongs to the transaldolase family. Type 3B subfamily.

It is found in the cytoplasm. It carries out the reaction D-sedoheptulose 7-phosphate + D-glyceraldehyde 3-phosphate = D-erythrose 4-phosphate + beta-D-fructose 6-phosphate. It functions in the pathway carbohydrate degradation; pentose phosphate pathway; D-glyceraldehyde 3-phosphate and beta-D-fructose 6-phosphate from D-ribose 5-phosphate and D-xylulose 5-phosphate (non-oxidative stage): step 2/3. Transaldolase is important for the balance of metabolites in the pentose-phosphate pathway. This chain is Probable transaldolase, found in Syntrophobacter fumaroxidans (strain DSM 10017 / MPOB).